The primary structure comprises 940 residues: Inter-alpha-trypsin inhibitor heavy chain H5 (940 aa).

A signal peptide spans 1-16 (MLLLLGLCLGLSQCVG). Residues 35 to 161 (VPRQVRLLQR…KAAFFLSYEE (127 aa)) form the VIT domain. N-linked (GlcNAc...) asparagine glycans are attached at residues N97 and N127. 2 disordered regions span residues 117–136 (KSGD…NGEK) and 208–227 (SRQR…PSTV). The N-linked (GlcNAc...) asparagine glycan is linked to N231. A VWFA domain is found at 295–478 (NVVFVLDSSA…SQLIGFYDEI (184 aa)). A disordered region spans residues 405 to 432 (DGWEAHGRGDAHPQDPQQHPRGRPRPSL). Positions 407-417 (WEAHGRGDAHP) are enriched in basic and acidic residues. A glycan (N-linked (GlcNAc...) asparagine) is linked at N508. Residues 541–571 (PKTDVPVGPQKAGKDVTGSPRPGGDGERNPN) form a disordered region. N-linked (GlcNAc...) asparagine glycans are attached at residues N774, N793, and N860.

Belongs to the ITIH family.

It localises to the secreted. In terms of biological role, may act as a tumor suppressor. The protein is Inter-alpha-trypsin inhibitor heavy chain H5 (ITIH5) of Pongo abelii (Sumatran orangutan).